The chain runs to 180 residues: Large ribosomal subunit protein uL22 (180 aa).

Residues 111 to 180 (VVVESRPAKD…ETSDAKGGSD (70 aa)) form a disordered region. Residues 142 to 166 (PAKKAPAKKAPAKKAPAKTAAKKTP) are compositionally biased toward basic residues. The segment covering 171–180 (ETSDAKGGSD) has biased composition (basic and acidic residues).

It belongs to the universal ribosomal protein uL22 family. As to quaternary structure, part of the 50S ribosomal subunit.

This protein binds specifically to 23S rRNA; its binding is stimulated by other ribosomal proteins, e.g. L4, L17, and L20. It is important during the early stages of 50S assembly. It makes multiple contacts with different domains of the 23S rRNA in the assembled 50S subunit and ribosome. Functionally, the globular domain of the protein is located near the polypeptide exit tunnel on the outside of the subunit, while an extended beta-hairpin is found that lines the wall of the exit tunnel in the center of the 70S ribosome. The chain is Large ribosomal subunit protein uL22 from Mycobacterium avium (strain 104).